Here is a 174-residue protein sequence, read N- to C-terminus: Dual-action ribosomal maturation protein DarP (174 aa).

Belongs to the DarP family.

It localises to the cytoplasm. Functionally, member of a network of 50S ribosomal subunit biogenesis factors which assembles along the 30S-50S interface, preventing incorrect 23S rRNA structures from forming. Promotes peptidyl transferase center (PTC) maturation. This is Dual-action ribosomal maturation protein DarP from Vibrio campbellii (strain ATCC BAA-1116).